The sequence spans 847 residues: Alanine--tRNA ligase (847 aa).

Residues histidine 554, histidine 558, cysteine 656, and histidine 660 each contribute to the Zn(2+) site.

This sequence belongs to the class-II aminoacyl-tRNA synthetase family. Zn(2+) is required as a cofactor.

The protein localises to the cytoplasm. The enzyme catalyses tRNA(Ala) + L-alanine + ATP = L-alanyl-tRNA(Ala) + AMP + diphosphate. Its function is as follows. Catalyzes the attachment of alanine to tRNA(Ala) in a two-step reaction: alanine is first activated by ATP to form Ala-AMP and then transferred to the acceptor end of tRNA(Ala). Also edits incorrectly charged Ser-tRNA(Ala) and Gly-tRNA(Ala) via its editing domain. The polypeptide is Alanine--tRNA ligase (Helicobacter pylori (strain J99 / ATCC 700824) (Campylobacter pylori J99)).